We begin with the raw amino-acid sequence, 115 residues long: uncharacterized protein (115 aa).

This is an uncharacterized protein from Rickettsia prowazekii (strain Madrid E).